Reading from the N-terminus, the 156-residue chain is UPF0587 protein (156 aa).

The Zn(2+) site is built by Cys-32, Cys-35, Cys-64, and Cys-67.

This sequence belongs to the UPF0587 family.

The sequence is that of UPF0587 protein from Dictyostelium discoideum (Social amoeba).